The sequence spans 247 residues: tRNA pseudouridine synthase A (247 aa).

Asp-53 (nucleophile) is an active-site residue. Tyr-111 contacts substrate.

The protein belongs to the tRNA pseudouridine synthase TruA family. In terms of assembly, homodimer.

It carries out the reaction uridine(38/39/40) in tRNA = pseudouridine(38/39/40) in tRNA. In terms of biological role, formation of pseudouridine at positions 38, 39 and 40 in the anticodon stem and loop of transfer RNAs. This is tRNA pseudouridine synthase A from Lacticaseibacillus casei (strain BL23) (Lactobacillus casei).